The sequence spans 123 residues: Large ribosomal subunit protein bL17 (123 aa).

Belongs to the bacterial ribosomal protein bL17 family. Part of the 50S ribosomal subunit. Contacts protein L32.

The polypeptide is Large ribosomal subunit protein bL17 (Borrelia hermsii (strain HS1 / DAH)).